Here is a 118-residue protein sequence, read N- to C-terminus: BolA-like protein 3 (118 aa).

It belongs to the BolA/IbaG family. Interacts with NFU1.

The protein resides in the mitochondrion matrix. Its function is as follows. Acts as a mitochondrial iron-sulfur (Fe-S) cluster assembly factor that facilitates [4Fe-4S] cluster insertion into a subset of mitochondrial proteins such as lipoyl synthase (LS) and succinate dehydrogenase (SDH). Required during the last step of iron-sulfur protein assembly when the iron-sulfur cluster is inserted into the target protein. Acts together with NFU1, later than BOL1 and GRX5 in the [4Fe-4S] cluster insertion process. Not required for [2Fe-2S] cluster insertion into mitochondrial proteins. The sequence is that of BolA-like protein 3 from Saccharomyces cerevisiae (strain ATCC 204508 / S288c) (Baker's yeast).